A 106-amino-acid chain; its full sequence is ATP-dependent Clp protease adapter protein ClpS (106 aa).

Belongs to the ClpS family. In terms of assembly, binds to the N-terminal domain of the chaperone ClpA.

Involved in the modulation of the specificity of the ClpAP-mediated ATP-dependent protein degradation. The protein is ATP-dependent Clp protease adapter protein ClpS of Aliivibrio salmonicida (strain LFI1238) (Vibrio salmonicida (strain LFI1238)).